The following is a 304-amino-acid chain: Dermonecrotic toxin LiSicTox-betaIA1i (304 aa).

An N-terminal signal peptide occupies residues 1–21 (MLLPAVISFIVYAVFLQEANG). A propeptide spanning residues 22 to 26 (HAAER) is cleaved from the precursor. His-38 is a catalytic residue. Residues Glu-58 and Asp-60 each contribute to the Mg(2+) site. The Nucleophile role is filled by His-74. 2 disulfides stabilise this stretch: Cys-78-Cys-84 and Cys-80-Cys-223. Asp-118 provides a ligand contact to Mg(2+).

This sequence belongs to the arthropod phospholipase D family. Class II subfamily. Class IIb sub-subfamily. It depends on Mg(2+) as a cofactor. As to expression, expressed by the venom gland.

The protein localises to the secreted. It catalyses the reaction an N-(acyl)-sphingosylphosphocholine = an N-(acyl)-sphingosyl-1,3-cyclic phosphate + choline. The catalysed reaction is an N-(acyl)-sphingosylphosphoethanolamine = an N-(acyl)-sphingosyl-1,3-cyclic phosphate + ethanolamine. It carries out the reaction a 1-acyl-sn-glycero-3-phosphocholine = a 1-acyl-sn-glycero-2,3-cyclic phosphate + choline. The enzyme catalyses a 1-acyl-sn-glycero-3-phosphoethanolamine = a 1-acyl-sn-glycero-2,3-cyclic phosphate + ethanolamine. Its function is as follows. Dermonecrotic toxins cleave the phosphodiester linkage between the phosphate and headgroup of certain phospholipids (sphingolipid and lysolipid substrates), forming an alcohol (often choline) and a cyclic phosphate. This toxin acts on sphingomyelin (SM) with low activity. It may also act on ceramide phosphoethanolamine (CPE), lysophosphatidylcholine (LPC) and lysophosphatidylethanolamine (LPE), but not on lysophosphatidylserine (LPS), and lysophosphatidylglycerol (LPG). It acts by transphosphatidylation, releasing exclusively cyclic phosphate products as second products. Induces inflammatory response but no or very weak hemolysis, dermonecrosis, vascular permeability, edema, and cytotoxicity against renal epithelial cells. Causes swelling and erythema. In vivo, is not lethal to mice when intraperitoneally injected. This chain is Dermonecrotic toxin LiSicTox-betaIA1i, found in Loxosceles intermedia (Brown spider).